Here is a 205-residue protein sequence, read N- to C-terminus: Urease accessory protein UreG (205 aa).

G11–T18 provides a ligand contact to GTP.

Belongs to the SIMIBI class G3E GTPase family. UreG subfamily. In terms of assembly, homodimer. UreD, UreF and UreG form a complex that acts as a GTP-hydrolysis-dependent molecular chaperone, activating the urease apoprotein by helping to assemble the nickel containing metallocenter of UreC. The UreE protein probably delivers the nickel.

It localises to the cytoplasm. Its function is as follows. Facilitates the functional incorporation of the urease nickel metallocenter. This process requires GTP hydrolysis, probably effectuated by UreG. This is Urease accessory protein UreG from Prochlorococcus marinus (strain NATL1A).